A 338-amino-acid chain; its full sequence is UDP-glucose 4-epimerase (338 aa).

Residues 16 to 17, 37 to 42, 59 to 60, 81 to 85, Thr126, Tyr153, Lys157, and Phe181 each bind NAD(+); these read YI, IDINHT, NL, and FAAKT. Substrate contacts are provided by Thr126 and Tyr153. Tyr153 (proton acceptor) is an active-site residue. Residues Asn182, 198-199, 215-217, Arg230, and 294-297 contribute to the substrate site; these read TL, FLY, and RAGD.

This sequence belongs to the NAD(P)-dependent epimerase/dehydratase family. Homodimer. NAD(+) serves as cofactor.

It catalyses the reaction UDP-alpha-D-glucose = UDP-alpha-D-galactose. It participates in carbohydrate metabolism; galactose metabolism. Its function is as follows. Involved in the metabolism of galactose. Catalyzes the conversion of UDP-galactose (UDP-Gal) to UDP-glucose (UDP-Glc) through a mechanism involving the transient reduction of NAD. The polypeptide is UDP-glucose 4-epimerase (galE) (Mycoplasma pneumoniae (strain ATCC 29342 / M129 / Subtype 1) (Mycoplasmoides pneumoniae)).